The following is a 1073-amino-acid chain: Pharyngeal muscle protein 2 (1073 aa).

In terms of domain architecture, SAP spans 9–43 (INDLRVSELKTELEKRGLSTQGVKVVLTVRLNKAL). Disordered stretches follow at residues 59–186 (VSPM…PEVV), 207–305 (ELKE…SMET), and 337–388 (LLED…KSML). Positions 91 to 111 (EGNDENVLVEEKEEEEEEEDS) are enriched in acidic residues. Basic and acidic residues predominate over residues 112-127 (HDLQIIEDHELEVPSD). Acidic residues predominate over residues 128–151 (EKDDTLVEDEEFEEAEQVEPEPEA). 2 stretches are compositionally biased toward basic and acidic residues: residues 156-182 (VEEK…KPVE) and 207-217 (ELKEKPEKEPE). 2 stretches are compositionally biased toward acidic residues: residues 223–232 (EPVEQLENEP) and 248–265 (QDGE…DIEI). Positions 277–293 (AEEKVEKKEKKPEEIPH) are enriched in basic and acidic residues. Positions 366 to 386 (ASTPQATPSKAASSSAGSGKS) are enriched in low complexity. The region spanning 396–478 (TSIWIRGMTP…RVLRVEKVSE (83 aa)) is the RRM domain. 3 disordered regions span residues 481–759 (LTSS…ERRR), 845–917 (QEHR…RNLV), and 1015–1073 (SQNA…RGNY). Low complexity-rich tracts occupy residues 496–505 (EAASTMSTSP) and 513–524 (PVVTTTTTTSAA). Residues 573 to 587 (ITFDREEESNRDSRR) are compositionally biased toward basic and acidic residues. The span at 588–622 (TIAAAPPARTSRMARSPLRAPLRAARGSESSRSST) shows a compositional bias: low complexity. Over residues 674–689 (VTVQQDAPRASYQTEQ) the composition is skewed to polar residues. Basic and acidic residues-rich tracts occupy residues 707–727 (VSPD…RRAP) and 742–759 (PPRR…ERRR). 3 stretches are compositionally biased toward low complexity: residues 901–917 (SSSN…RNLV), 1015–1026 (SQNAATPSTSTS), and 1034–1060 (QWQQ…SSSN).

Expressed in most tissues including the hypodermal, muscle, neuronal, vulval and intestinal tissues. Isoform a: Expressed in the pharynx, nerve ring, intestine, neurons and ventral nerve cord.

The protein localises to the nucleus. Involved in pharyngeal muscle development and ensures pharyngeal grinder function during feeding. Plays a role in the defense against the accumulation of ingested live pathogenic bacteria in the intestine. Has a role in the determination of life span. This chain is Pharyngeal muscle protein 2, found in Caenorhabditis elegans.